We begin with the raw amino-acid sequence, 103 residues long: uncharacterized protein (103 aa).

The span at 38 to 51 (TTTTSSTTSASTTS) shows a compositional bias: low complexity. Residues 38 to 70 (TTTTSSTTSASTTSQPSFSLPTSCNSNSPQSNL) form a disordered region. Residues 52–70 (QPSFSLPTSCNSNSPQSNL) show a composition bias toward polar residues.

This is an uncharacterized protein from Dictyostelium discoideum (Social amoeba).